A 225-amino-acid polypeptide reads, in one-letter code: Phosphoribosylformylglycinamidine synthase subunit PurQ (225 aa).

Positions 4-225 (RVGVITFPGT…YSVLDSVISA (222 aa)) constitute a Glutamine amidotransferase type-1 domain. Residue Cys87 is the Nucleophile of the active site. Catalysis depends on residues His196 and Glu198.

Part of the FGAM synthase complex composed of 1 PurL, 1 PurQ and 2 PurS subunits.

The protein localises to the cytoplasm. The enzyme catalyses N(2)-formyl-N(1)-(5-phospho-beta-D-ribosyl)glycinamide + L-glutamine + ATP + H2O = 2-formamido-N(1)-(5-O-phospho-beta-D-ribosyl)acetamidine + L-glutamate + ADP + phosphate + H(+). It catalyses the reaction L-glutamine + H2O = L-glutamate + NH4(+). The protein operates within purine metabolism; IMP biosynthesis via de novo pathway; 5-amino-1-(5-phospho-D-ribosyl)imidazole from N(2)-formyl-N(1)-(5-phospho-D-ribosyl)glycinamide: step 1/2. Part of the phosphoribosylformylglycinamidine synthase complex involved in the purines biosynthetic pathway. Catalyzes the ATP-dependent conversion of formylglycinamide ribonucleotide (FGAR) and glutamine to yield formylglycinamidine ribonucleotide (FGAM) and glutamate. The FGAM synthase complex is composed of three subunits. PurQ produces an ammonia molecule by converting glutamine to glutamate. PurL transfers the ammonia molecule to FGAR to form FGAM in an ATP-dependent manner. PurS interacts with PurQ and PurL and is thought to assist in the transfer of the ammonia molecule from PurQ to PurL. The sequence is that of Phosphoribosylformylglycinamidine synthase subunit PurQ from Rhodococcus jostii (strain RHA1).